The chain runs to 100 residues: Bombyxin A-2 homolog (100 aa).

Positions 1 to 18 (MRTQVLFLIVVLAVMASG) are cleaved as a signal peptide. 3 cysteine pairs are disulfide-bonded: cysteine 26/cysteine 85, cysteine 38/cysteine 98, and cysteine 84/cysteine 89. The propeptide at 47 to 75 (PPYISSENEGYGWKWLERQRARQLDEARG) is c peptide like.

Belongs to the insulin family. In terms of assembly, heterodimer of a B chain and an A chain linked by two disulfide bonds.

Its subcellular location is the secreted. Functionally, brain peptide responsible for activation of prothoracic glands to produce ecdysone in insects. The protein is Bombyxin A-2 homolog (SBXA2) of Samia cynthia (Ailanthus silkmoth).